The primary structure comprises 181 residues: Adenylate kinase (181 aa).

An ATP-binding site is contributed by 10-15 (GAGKGT). The segment at 30–59 (STGELFRSNIENGTKLGLEAKRYLDAGDLV) is NMP. AMP is bound by residues Thr31, Arg36, 57-59 (DLV), 85-88 (GFPR), and Gln92. The tract at residues 126–132 (ARGRADD) is LID. Arg127 provides a ligand contact to ATP. AMP contacts are provided by Arg129 and Arg140. Gly166 contacts ATP.

The protein belongs to the adenylate kinase family. As to quaternary structure, monomer.

The protein resides in the cytoplasm. The enzyme catalyses AMP + ATP = 2 ADP. The protein operates within purine metabolism; AMP biosynthesis via salvage pathway; AMP from ADP: step 1/1. Functionally, catalyzes the reversible transfer of the terminal phosphate group between ATP and AMP. Plays an important role in cellular energy homeostasis and in adenine nucleotide metabolism. This chain is Adenylate kinase, found in Mycolicibacterium paratuberculosis (strain ATCC BAA-968 / K-10) (Mycobacterium paratuberculosis).